The sequence spans 246 residues: 3-deoxy-manno-octulosonate cytidylyltransferase (246 aa).

It belongs to the KdsB family.

The protein localises to the cytoplasm. It catalyses the reaction 3-deoxy-alpha-D-manno-oct-2-ulosonate + CTP = CMP-3-deoxy-beta-D-manno-octulosonate + diphosphate. It participates in nucleotide-sugar biosynthesis; CMP-3-deoxy-D-manno-octulosonate biosynthesis; CMP-3-deoxy-D-manno-octulosonate from 3-deoxy-D-manno-octulosonate and CTP: step 1/1. It functions in the pathway bacterial outer membrane biogenesis; lipopolysaccharide biosynthesis. Activates KDO (a required 8-carbon sugar) for incorporation into bacterial lipopolysaccharide in Gram-negative bacteria. The sequence is that of 3-deoxy-manno-octulosonate cytidylyltransferase from Leptospira biflexa serovar Patoc (strain Patoc 1 / Ames).